A 435-amino-acid polypeptide reads, in one-letter code: Putative F-box/kelch-repeat protein At1g20790 (435 aa).

The region spanning 1–49 (MKRLPLHLLDEILFNLDPKSLGKMRCTNKSINTHISDDPNFKFEYFSRI) is the F-box domain. Kelch repeat units lie at residues 192-238 (PVYV…CTGD) and 280-335 (LYWN…LFKP).

This Arabidopsis thaliana (Mouse-ear cress) protein is Putative F-box/kelch-repeat protein At1g20790.